The chain runs to 346 residues: D-alanine--D-alanine ligase (346 aa).

One can recognise an ATP-grasp domain in the interval 133 to 327 (KLYAKSVGVK…TLADQIPLEK (195 aa)). Residue 159 to 211 (LRFPCIIKPARLGSSIGISIVKDEKDLEYAKDVGFEFDNDLVVEEFKNNIKEY) coordinates ATP. Mg(2+) contacts are provided by aspartate 284, glutamate 296, and asparagine 298.

Belongs to the D-alanine--D-alanine ligase family. The cofactor is Mg(2+). Mn(2+) serves as cofactor.

It localises to the cytoplasm. It catalyses the reaction 2 D-alanine + ATP = D-alanyl-D-alanine + ADP + phosphate + H(+). It functions in the pathway cell wall biogenesis; peptidoglycan biosynthesis. Its function is as follows. Cell wall formation. The sequence is that of D-alanine--D-alanine ligase from Campylobacter jejuni subsp. doylei (strain ATCC BAA-1458 / RM4099 / 269.97).